Consider the following 295-residue polypeptide: Mediator of RNA polymerase II transcription subunit 27 (295 aa).

It belongs to the Mediator complex subunit 27 family. In terms of assembly, component of the Mediator complex.

Its subcellular location is the nucleus. Component of the Mediator complex, a coactivator involved in the regulated transcription of nearly all RNA polymerase II-dependent genes. Mediator functions as a bridge to convey information from gene-specific regulatory proteins to the basal RNA polymerase II transcription machinery. Mediator is recruited to promoters by direct interactions with regulatory proteins and serves as a scaffold for the assembly of a functional preinitiation complex with RNA polymerase II and the general transcription factors. This chain is Mediator of RNA polymerase II transcription subunit 27 (MED27), found in Aedes aegypti (Yellowfever mosquito).